The sequence spans 174 residues: MGEINALSCVGQDDVVSLRIVCTMARDGKQHNLEDVDMYGNTALLKACYLGRFECARTLLEFGANIFAMNYFGQNALTLATYAGHLTLVKELLRRRSYKDFNLSSMIPALCVATLQKHSALVAYFTQLDSRGVQETQTVHGLGVAELRGMIKAAGRLDKRNVRSPPTFISNRLR.

2 ANK repeats span residues Tyr39–Ala68 and Phe72–Leu103. Thr167 bears the Phosphothreonine mark.

Functionally, inhibits DNA replication early in developments. May bind and block the action of a replication or initiation factor. In Drosophila melanogaster (Fruit fly), this protein is DNA replication inhibitor plutonium (plu).